The sequence spans 84 residues: UPF0457 protein BCE33L2961 (84 aa).

Belongs to the UPF0457 family.

The chain is UPF0457 protein BCE33L2961 from Bacillus cereus (strain ZK / E33L).